Here is a 554-residue protein sequence, read N- to C-terminus: (+)-delta-cadinene synthase isozyme XC1 (554 aa).

Low complexity predominate over residues 1 to 16 (MASQVSQMPSSSPLSS). Residues 1–23 (MASQVSQMPSSSPLSSNKDEMRP) are disordered. 4 residues coordinate Mg(2+): Asp307, Asp311, Asp451, and Glu455. Residues 307–311 (DDTYD) carry the DDXXD motif motif.

Belongs to the terpene synthase family. Requires Mg(2+) as cofactor.

It carries out the reaction (2E,6E)-farnesyl diphosphate = (1S,8aR)-delta-cadinene + diphosphate. It participates in secondary metabolite biosynthesis; terpenoid biosynthesis. Its function is as follows. Responsible for the cyclization of trans,trans-farnesyl diphosphate (FPP) to (+)-delta cadinene. In Gossypium arboreum (Tree cotton), this protein is (+)-delta-cadinene synthase isozyme XC1.